Reading from the N-terminus, the 263-residue chain is Thymidylate synthase (263 aa).

Residues R25 and 123 to 124 (RR) contribute to the dUMP site. C143 serves as the catalytic Nucleophile. Residues 163–166 (RSGD), N174, and 204–206 (HIY) contribute to the dUMP site. A (6R)-5,10-methylene-5,6,7,8-tetrahydrofolate-binding site is contributed by D166. Residue S262 participates in (6R)-5,10-methylene-5,6,7,8-tetrahydrofolate binding.

It belongs to the thymidylate synthase family. Bacterial-type ThyA subfamily. As to quaternary structure, homodimer.

The protein resides in the cytoplasm. It carries out the reaction dUMP + (6R)-5,10-methylene-5,6,7,8-tetrahydrofolate = 7,8-dihydrofolate + dTMP. Its pathway is pyrimidine metabolism; dTTP biosynthesis. In terms of biological role, catalyzes the reductive methylation of 2'-deoxyuridine-5'-monophosphate (dUMP) to 2'-deoxythymidine-5'-monophosphate (dTMP) while utilizing 5,10-methylenetetrahydrofolate (mTHF) as the methyl donor and reductant in the reaction, yielding dihydrofolate (DHF) as a by-product. This enzymatic reaction provides an intracellular de novo source of dTMP, an essential precursor for DNA biosynthesis. In Clostridium beijerinckii (strain ATCC 51743 / NCIMB 8052) (Clostridium acetobutylicum), this protein is Thymidylate synthase.